The sequence spans 356 residues: MKFLDEAKVYIRSGDGGNGCVAFRREKFIEYGGPNGGNGGRGGDVIIETVDGLNTLIDYRYQQHFKAQKGGHGMGSDRHGAGGDDIVLKVPVGTQVFDEDRETLLHDFTRLGERFVIAKGGNGGFGNAHFKSSTNRAPRHANPGQPGEERWIWLRMKLIADAGLVGLPNAGKSTFLSVVSAAKPKIADYPFTTLHPQLGVVRSDGREFVLADIPGLIEGAHEGTGLGDRFLGHVERCRVLLHLVDATCEHAGKAYKIVRNELAAYEHDLTDKVEIVALNKIDAVTPEQLKEQKARLKRAAKQTPMLVSGVTGEGVPEVLRALTDVISEAPVSTKAKGEPTENETPPPSTGWSPLSN.

In terms of domain architecture, Obg spans 1-159 (MKFLDEAKVY…RWIWLRMKLI (159 aa)). The 168-residue stretch at 160–327 (ADAGLVGLPN…VLRALTDVIS (168 aa)) folds into the OBG-type G domain. GTP is bound by residues 166 to 173 (GLPNAGKS), 191 to 195 (FTTLH), 212 to 215 (DIPG), 279 to 282 (NKID), and 308 to 310 (SGV). Mg(2+)-binding residues include S173 and T193. Residues 329–356 (APVSTKAKGEPTENETPPPSTGWSPLSN) form a disordered region.

Belongs to the TRAFAC class OBG-HflX-like GTPase superfamily. OBG GTPase family. In terms of assembly, monomer. Mg(2+) serves as cofactor.

The protein resides in the cytoplasm. Functionally, an essential GTPase which binds GTP, GDP and possibly (p)ppGpp with moderate affinity, with high nucleotide exchange rates and a fairly low GTP hydrolysis rate. Plays a role in control of the cell cycle, stress response, ribosome biogenesis and in those bacteria that undergo differentiation, in morphogenesis control. The sequence is that of GTPase Obg from Afipia carboxidovorans (strain ATCC 49405 / DSM 1227 / KCTC 32145 / OM5) (Oligotropha carboxidovorans).